The sequence spans 645 residues: 1,4-alpha-glucan branching enzyme GlgB (645 aa).

The active-site Nucleophile is D309. The active-site Proton donor is E352. Residues 619–645 (VKTRKGSKKQDGSKTKVRSNVTSRGKR) are disordered. A compositionally biased stretch (polar residues) spans 636 to 645 (RSNVTSRGKR).

It belongs to the glycosyl hydrolase 13 family. GlgB subfamily. Monomer.

The catalysed reaction is Transfers a segment of a (1-&gt;4)-alpha-D-glucan chain to a primary hydroxy group in a similar glucan chain.. It participates in glycan biosynthesis; glycogen biosynthesis. Functionally, catalyzes the formation of the alpha-1,6-glucosidic linkages in glycogen by scission of a 1,4-alpha-linked oligosaccharide from growing alpha-1,4-glucan chains and the subsequent attachment of the oligosaccharide to the alpha-1,6 position. The protein is 1,4-alpha-glucan branching enzyme GlgB of Bacillus cereus (strain ATCC 14579 / DSM 31 / CCUG 7414 / JCM 2152 / NBRC 15305 / NCIMB 9373 / NCTC 2599 / NRRL B-3711).